Consider the following 132-residue polypeptide: C-X-C motif chemokine 5 (132 aa).

Residues 1–40 form the signal peptide; that stretch reads MSLQLRSSARIPSGSISPFMRMAPLAFLLLFTLPQHLAEA. Intrachain disulfides connect cysteine 53/cysteine 79 and cysteine 55/cysteine 95.

The protein belongs to the intercrine alpha (chemokine CxC) family. Monomer. Homodimer. GCP-2(1-78) and GCP-2(9-78) are produced by proteolytic cleavage after secretion from fibroblasts and epithelial cells. GCP-2(9-78) is the most prominent form. A number of additional N-terminal (processed between pos. 41 and 48) and C-terminal (processed between pos. 118 and 132) processed forms have been identified, probably also representing intermediate states.

It localises to the secreted. Its function is as follows. May participate in the recruitment of inflammatory cells by injured or infected tissue. GCP-2(1-78) and, more potent, GCP-2(9-78) attract neutrophils and are involved in neutrophil activation. The polypeptide is C-X-C motif chemokine 5 (Cxcl5) (Mus musculus (Mouse)).